Reading from the N-terminus, the 464-residue chain is MKGKVIQVMGPVVDVEFDGYLPEINEAIDVTLADASKDRLVLEVAAHIGDSRVRTIAMDMTEGLVRGQECIATGGPIKVPVGEAVLGRIFNVIGDPVDEGSAIPADTERWSIHRSAPTFEEQSTKTEMFETGIKVVDLLAPYSKGGKVGLFGGAGVGKTVIIMELIHNVAFKHSGYSVFAGVGERTREGNDLYHEMKDSNVLDKVALCYGQMSEPPGARNRIALTGLTMAEYFRDEKGLDVLMFIDNIFRFAQSGSEMSALLGRIPSAVGYQPTLASEMGKLQERITSTSKGSITSVQAVYVPADDLTDPAPASVFAHLDATTVLNRKIAEKGIYPAVDPLDSTSRILSADIIGQEHYNTARGVQSVLQKYKDLQDIIAILGMDELSESDKLVVARARKIERFLSQPFFVAEVFTGSPGKYVELKDTIAGFQGILDGKYDNIPEMAFYMVGGIDEVLAKAEKMK.

152–159 (GGAGVGKT) is an ATP binding site.

The protein belongs to the ATPase alpha/beta chains family. F-type ATPases have 2 components, CF(1) - the catalytic core - and CF(0) - the membrane proton channel. CF(1) has five subunits: alpha(3), beta(3), gamma(1), delta(1), epsilon(1). CF(0) has three main subunits: a(1), b(2) and c(9-12). The alpha and beta chains form an alternating ring which encloses part of the gamma chain. CF(1) is attached to CF(0) by a central stalk formed by the gamma and epsilon chains, while a peripheral stalk is formed by the delta and b chains.

It is found in the cell inner membrane. It catalyses the reaction ATP + H2O + 4 H(+)(in) = ADP + phosphate + 5 H(+)(out). In terms of biological role, produces ATP from ADP in the presence of a proton gradient across the membrane. The catalytic sites are hosted primarily by the beta subunits. In Aliarcobacter butzleri (strain RM4018) (Arcobacter butzleri), this protein is ATP synthase subunit beta.